The primary structure comprises 354 residues: Rhodopsin (354 aa).

Topologically, residues M1–A36 are extracellular. Residues N2 and N15 are each glycosylated (N-linked (GlcNAc...) asparagine). The helical transmembrane segment at Y37–V61 threads the bilayer. The Cytoplasmic portion of the chain corresponds to T62–N73. Residues Y74–Y96 traverse the membrane as a helical segment. Residues T97–C110 lie on the Extracellular side of the membrane. The cysteines at positions 110 and 187 are disulfide-linked. Residues N111–I133 form a helical membrane-spanning segment. The 'Ionic lock' involved in activated form stabilization motif lies at E134 to W136. Topologically, residues E134–H152 are cytoplasmic. Residues A153–F173 traverse the membrane as a helical segment. The Extracellular segment spans residues G174–S202. The N-linked (GlcNAc...) asparagine glycan is linked to N200. A helical transmembrane segment spans residues F203–G224. The Cytoplasmic portion of the chain corresponds to R225 to R252. The chain crosses the membrane as a helical span at residues M253–Y274. Topologically, residues I275–L286 are extracellular. Residues F287–C308 form a helical membrane-spanning segment. N6-(retinylidene)lysine is present on K296. Residues M309–A354 are Cytoplasmic-facing. Residues C322 and C323 are each lipidated (S-palmitoyl cysteine). Residues E329–A354 are disordered. A compositionally biased stretch (low complexity) spans A334–A354.

The protein belongs to the G-protein coupled receptor 1 family. Opsin subfamily. Post-translationally, phosphorylated on some or all of the serine and threonine residues present in the C-terminal region. Contains one covalently linked retinal chromophore.

Its subcellular location is the membrane. The protein resides in the cell projection. The protein localises to the cilium. It is found in the photoreceptor outer segment. Photoreceptor required for image-forming vision at low light intensity. While most salt water fish species use retinal as chromophore, most freshwater fish use 3-dehydroretinal, or a mixture of retinal and 3-dehydroretinal. Light-induced isomerization of 11-cis to all-trans retinal triggers a conformational change that activates signaling via G-proteins. Subsequent receptor phosphorylation mediates displacement of the bound G-protein alpha subunit by arrestin and terminates signaling. In Atherina boyeri (Big-scale sand smelt), this protein is Rhodopsin (rho).